A 244-amino-acid chain; its full sequence is Uridylate kinase (244 aa).

11–14 (KLSG) contributes to the ATP binding site. Positions 19–24 (GSLGYG) are involved in allosteric activation by GTP. Position 53 (G53) interacts with UMP. 2 residues coordinate ATP: G54 and R58. Residues D73 and 134-141 (SGNPFFTT) each bind UMP. Residues T161, Y167, and D170 each contribute to the ATP site.

The protein belongs to the UMP kinase family. In terms of assembly, homohexamer.

Its subcellular location is the cytoplasm. The enzyme catalyses UMP + ATP = UDP + ADP. It participates in pyrimidine metabolism; CTP biosynthesis via de novo pathway; UDP from UMP (UMPK route): step 1/1. Its activity is regulated as follows. Allosterically activated by GTP. Inhibited by UTP. Catalyzes the reversible phosphorylation of UMP to UDP. The protein is Uridylate kinase of Trichodesmium erythraeum (strain IMS101).